Consider the following 206-residue polypeptide: Casparian strip membrane protein 1 (206 aa).

An N-acetylalanine modification is found at A2. Over 2-43 (AKESTTIDVGEPSTVTKSSSHVVKDAKKKGFVAVASRGGAKR) the chain is Cytoplasmic. A helical transmembrane segment spans residues 44-64 (GLAIFDFLLRLAAIAVTIGAA). Residues 65 to 95 (SVMYTAEETLPFFTQFLQFQAGYDDLPAFQY) are Extracellular-facing. The helical transmembrane segment at 96 to 116 (FVIAVAVVASYLVLSLPFSIV) threads the bilayer. Over 117–127 (SIVRPHAVAPR) the chain is Cytoplasmic. Residues 128-148 (LILLICDTLVVTLNTSAAAAA) form a helical membrane-spanning segment. The Extracellular portion of the chain corresponds to 149–180 (ASITYLAHNGNQSTNWLPICQQFGDFCQNVST). N-linked (GlcNAc...) asparagine glycans are attached at residues N159 and N177. Residues 181 to 201 (AVVADSIAILFFIVLIIISAI) traverse the membrane as a helical segment. Over 202-206 (ALKRH) the chain is Cytoplasmic.

Belongs to the Casparian strip membrane proteins (CASP) family. As to quaternary structure, homodimer and heterodimers with other CASP proteins. Interacts with CASP2, CASP3, CASP4 and CASP5.

The protein localises to the cell membrane. In terms of biological role, regulates membrane-cell wall junctions and localized cell wall deposition. Required for establishment of the Casparian strip membrane domain (CSD) and the subsequent formation of Casparian strips, a cell wall modification of the root endodermis that determines an apoplastic barrier between the intraorganismal apoplasm and the extraorganismal apoplasm and prevents lateral diffusion. This Arabidopsis thaliana (Mouse-ear cress) protein is Casparian strip membrane protein 1 (CASP1).